The chain runs to 1407 residues: DNA-directed RNA polymerase subunit beta' (1407 aa).

Residues C70, C72, C85, and C88 each contribute to the Zn(2+) site. The Mg(2+) site is built by D460, D462, and D464. Zn(2+)-binding residues include C814, C888, C895, and C898. N6-acetyllysine is present on K972.

It belongs to the RNA polymerase beta' chain family. As to quaternary structure, the RNAP catalytic core consists of 2 alpha, 1 beta, 1 beta' and 1 omega subunit. When a sigma factor is associated with the core the holoenzyme is formed, which can initiate transcription. It depends on Mg(2+) as a cofactor. The cofactor is Zn(2+).

It carries out the reaction RNA(n) + a ribonucleoside 5'-triphosphate = RNA(n+1) + diphosphate. Its function is as follows. DNA-dependent RNA polymerase catalyzes the transcription of DNA into RNA using the four ribonucleoside triphosphates as substrates. This chain is DNA-directed RNA polymerase subunit beta', found in Escherichia coli (strain SMS-3-5 / SECEC).